The following is a 215-amino-acid chain: UPF0502 protein PSEEN2299 (215 aa).

This sequence belongs to the UPF0502 family.

The protein is UPF0502 protein PSEEN2299 of Pseudomonas entomophila (strain L48).